The chain runs to 255 residues: tRNA (guanine-N(1)-)-methyltransferase (255 aa).

S-adenosyl-L-methionine-binding positions include Gly-113 and 133 to 138 (IGDYVL).

This sequence belongs to the RNA methyltransferase TrmD family. As to quaternary structure, homodimer.

Its subcellular location is the cytoplasm. The enzyme catalyses guanosine(37) in tRNA + S-adenosyl-L-methionine = N(1)-methylguanosine(37) in tRNA + S-adenosyl-L-homocysteine + H(+). Functionally, specifically methylates guanosine-37 in various tRNAs. This Mannheimia succiniciproducens (strain KCTC 0769BP / MBEL55E) protein is tRNA (guanine-N(1)-)-methyltransferase.